We begin with the raw amino-acid sequence, 197 residues long: ATP-dependent Clp protease proteolytic subunit (197 aa).

The active-site Nucleophile is serine 101. Histidine 126 is an active-site residue.

Belongs to the peptidase S14 family. Component of the chloroplastic Clp protease core complex.

It is found in the plastid. The protein resides in the chloroplast stroma. It carries out the reaction Hydrolysis of proteins to small peptides in the presence of ATP and magnesium. alpha-casein is the usual test substrate. In the absence of ATP, only oligopeptides shorter than five residues are hydrolyzed (such as succinyl-Leu-Tyr-|-NHMec, and Leu-Tyr-Leu-|-Tyr-Trp, in which cleavage of the -Tyr-|-Leu- and -Tyr-|-Trp bonds also occurs).. Functionally, cleaves peptides in various proteins in a process that requires ATP hydrolysis. Has a chymotrypsin-like activity. Plays a major role in the degradation of misfolded proteins. The chain is ATP-dependent Clp protease proteolytic subunit from Daucus carota (Wild carrot).